The primary structure comprises 314 residues: Tetraacyldisaccharide 4'-kinase (314 aa).

54-61 (YIGGTGKT) lines the ATP pocket.

This sequence belongs to the LpxK family.

The catalysed reaction is a lipid A disaccharide + ATP = a lipid IVA + ADP + H(+). The protein operates within glycolipid biosynthesis; lipid IV(A) biosynthesis; lipid IV(A) from (3R)-3-hydroxytetradecanoyl-[acyl-carrier-protein] and UDP-N-acetyl-alpha-D-glucosamine: step 6/6. Transfers the gamma-phosphate of ATP to the 4'-position of a tetraacyldisaccharide 1-phosphate intermediate (termed DS-1-P) to form tetraacyldisaccharide 1,4'-bis-phosphate (lipid IVA). This chain is Tetraacyldisaccharide 4'-kinase, found in Pelagibacter ubique (strain HTCC1062).